Reading from the N-terminus, the 53-residue chain is Temporin-SHd (53 aa).

Positions 1–10 are cleaved as a signal peptide; that stretch reads FLGTINLSLC. Residues 11 to 34 constitute a propeptide that is removed on maturation; sequence EQERDADEEKRDEPDESDVEVEKR. F51 carries the post-translational modification Phenylalanine amide.

Its subcellular location is the secreted. The protein resides in the target cell membrane. Functionally, non-amphipathic mildly cationic alpha-helical antimicrobial peptide with potent activity against Gram-positive (including methicillin-resistant Staphylococcus aureus (MRSA)) and Gram-negative bacteria, and some fungi, as well as against Trypanosoma and Leishmania (both promastigote and amastigote forms). Strongly and selectively perturbs anionic bilayer membranes by interacting with the polar head groups and acyl region of the phospholipids, with formation of regions of two coexisting phases, one phase rich in peptide and the other lipid-rich. Shows low hemolytic activity (LC(50)=44 uM) and a low toxicity for human monocytes THP-1 and THP-1-derived macrophages. Is not toxic to human hepatoma-derived cells. The protein is Temporin-SHd of Pelophylax saharicus (Sahara frog).